A 221-amino-acid polypeptide reads, in one-letter code: Protein-L-isoaspartate O-methyltransferase (221 aa).

S60 is a catalytic residue.

It belongs to the methyltransferase superfamily. L-isoaspartyl/D-aspartyl protein methyltransferase family.

The protein localises to the cytoplasm. It carries out the reaction [protein]-L-isoaspartate + S-adenosyl-L-methionine = [protein]-L-isoaspartate alpha-methyl ester + S-adenosyl-L-homocysteine. In terms of biological role, catalyzes the methyl esterification of L-isoaspartyl residues in peptides and proteins that result from spontaneous decomposition of normal L-aspartyl and L-asparaginyl residues. It plays a role in the repair and/or degradation of damaged proteins. The polypeptide is Protein-L-isoaspartate O-methyltransferase (Rhodospirillum centenum (strain ATCC 51521 / SW)).